We begin with the raw amino-acid sequence, 149 residues long: D-aminoacyl-tRNA deacylase (149 aa).

The Gly-cisPro motif, important for rejection of L-amino acids signature appears at 139 to 140 (GP).

It belongs to the DTD family. Homodimer.

Its subcellular location is the cytoplasm. The catalysed reaction is glycyl-tRNA(Ala) + H2O = tRNA(Ala) + glycine + H(+). It carries out the reaction a D-aminoacyl-tRNA + H2O = a tRNA + a D-alpha-amino acid + H(+). Functionally, an aminoacyl-tRNA editing enzyme that deacylates mischarged D-aminoacyl-tRNAs. Also deacylates mischarged glycyl-tRNA(Ala), protecting cells against glycine mischarging by AlaRS. Acts via tRNA-based rather than protein-based catalysis; rejects L-amino acids rather than detecting D-amino acids in the active site. By recycling D-aminoacyl-tRNA to D-amino acids and free tRNA molecules, this enzyme counteracts the toxicity associated with the formation of D-aminoacyl-tRNA entities in vivo and helps enforce protein L-homochirality. The chain is D-aminoacyl-tRNA deacylase (DTD1) from Candida glabrata (strain ATCC 2001 / BCRC 20586 / JCM 3761 / NBRC 0622 / NRRL Y-65 / CBS 138) (Yeast).